Here is a 332-residue protein sequence, read N- to C-terminus: MATLKDQLIHNLLKEEQTPQNKITVVGVGAVGMACAISILMKDLADELALVDVIEDKLKGEMMDLQHGSLFLRTPKIVSGKDYSVTANSKLVIITAGARQQEGESRLNLVQRNVNIFKFIVPNVVKYSPNCKLLIVSNPVDILTYVAWKISGFPKNRVIGSGCNLDSARFRYLMGERLGVHPLSCHGWVLGEHGDSSVPVWSGMNVAGVSLKTLHPDLGTDKDKEQWKEVHKQVVESAYEVIKLKGYTSWAIGLSVADLAESIMKNLRRVHPVSTMIKGLYGIKDDVFLSVPCILGQNGISDLVKVTLTPEEEARLKKSADTLWGIQKELQF.

At A2 the chain carries N-acetylalanine. K5 carries the post-translational modification N6-acetyllysine; alternate. K5 carries the post-translational modification N6-succinyllysine; alternate. K14 is subject to N6-acetyllysine. T18 is subject to Phosphothreonine. Residue 29–57 (GAVGMACAISILMKDLADELALVDVIEDK) coordinates NAD(+). N6-acetyllysine; alternate is present on K57. Residue K57 forms a Glycyl lysine isopeptide (Lys-Gly) (interchain with G-Cter in SUMO2); alternate linkage. Position 81 is an N6-acetyllysine (K81). R99 serves as a coordination point for NAD(+). A substrate-binding site is contributed by R106. An N6-acetyllysine; alternate modification is found at K118. K118 bears the N6-succinyllysine; alternate mark. K126 is subject to N6-acetyllysine. An NAD(+)-binding site is contributed by N138. Positions 138 and 169 each coordinate substrate. H193 serves as the catalytic Proton acceptor. 2 positions are modified to N6-acetyllysine: K224 and K232. Y239 is subject to Phosphotyrosine. K243 is subject to N6-acetyllysine. Substrate is bound at residue T248. Position 309 is a phosphothreonine (T309). Position 318 is an N6-acetyllysine; alternate (K318). The residue at position 318 (K318) is an N6-succinyllysine; alternate. T322 is subject to Phosphothreonine.

This sequence belongs to the LDH/MDH superfamily. LDH family. Homotetramer. Interacts with PTEN upstream reading frame protein MP31. In terms of processing, ISGylated.

Its subcellular location is the cytoplasm. It carries out the reaction (S)-lactate + NAD(+) = pyruvate + NADH + H(+). Its pathway is fermentation; pyruvate fermentation to lactate; (S)-lactate from pyruvate: step 1/1. In terms of biological role, interconverts simultaneously and stereospecifically pyruvate and lactate with concomitant interconversion of NADH and NAD(+). This is L-lactate dehydrogenase A chain (LDHA) from Macaca fascicularis (Crab-eating macaque).